Here is a 443-residue protein sequence, read N- to C-terminus: Tubulin beta-1/beta-2 chain (443 aa).

8 residues coordinate GTP: Gln11, Glu69, Ser138, Gly142, Thr143, Gly144, Asn204, and Asn226. Glu69 is a binding site for Mg(2+). The segment at 424 to 443 is disordered; sequence QYQDASAEEEGEFEGEEEEA. The segment covering 429 to 443 has biased composition (acidic residues); that stretch reads SAEEEGEFEGEEEEA.

Belongs to the tubulin family. In terms of assembly, dimer of alpha and beta chains. A typical microtubule is a hollow water-filled tube with an outer diameter of 25 nm and an inner diameter of 15 nM. Alpha-beta heterodimers associate head-to-tail to form protofilaments running lengthwise along the microtubule wall with the beta-tubulin subunit facing the microtubule plus end conferring a structural polarity. Microtubules usually have 13 protofilaments but different protofilament numbers can be found in some organisms and specialized cells. Requires Mg(2+) as cofactor.

The protein localises to the cytoplasm. It localises to the cytoskeleton. In terms of biological role, tubulin is the major constituent of microtubules, a cylinder consisting of laterally associated linear protofilaments composed of alpha- and beta-tubulin heterodimers. Microtubules grow by the addition of GTP-tubulin dimers to the microtubule end, where a stabilizing cap forms. Below the cap, tubulin dimers are in GDP-bound state, owing to GTPase activity of alpha-tubulin. The protein is Tubulin beta-1/beta-2 chain (TUBB1) of Chlamydomonas reinhardtii (Chlamydomonas smithii).